Reading from the N-terminus, the 1309-residue chain is Tetratricopeptide repeat protein 41 (1309 aa).

6 TPR repeats span residues 399 to 432 (PQLE…KPCI), 651 to 684 (WIQE…SVRE), 817 to 851 (LTFL…SVQS), 859 to 892 (LKAQ…LLRF), 989 to 1024 (MSYF…KEKA), and 1042 to 1079 (SDTL…RAAH).

It is found in the cytoplasm. The protein is Tetratricopeptide repeat protein 41 of Rattus norvegicus (Rat).